The following is a 208-amino-acid chain: Putative dioxygenase RBE_0329 (208 aa).

The protein belongs to the intradiol ring-cleavage dioxygenase family.

The chain is Putative dioxygenase RBE_0329 from Rickettsia bellii (strain RML369-C).